The primary structure comprises 2094 residues: Non-reducing polyketide synthase ustP (2094 aa).

The interval 9–243 (VFGDLSVPYH…GKIQVGGLFH (235 aa)) is N-terminal acylcarrier protein transacylase (SAT) domain. Residues 357-377 (NTAGVDSSSRGSGHADAEKQP) form a disordered region. In terms of domain architecture, Ketosynthase family 3 (KS3) spans 379–813 (RSKIAIIGFS…GGNSSVLVED (435 aa)). Active-site for beta-ketoacyl synthase activity residues include cysteine 551, histidine 686, and histidine 727. The malonyl-CoA:ACP transacylase (MAT) domain stretch occupies residues 914-1227 (FSFTGQGSQY…EDDCKIFTPA (314 aa)). Serine 1004 serves as the catalytic For acyl/malonyl transferase activity. The product template (PT) domain stretch occupies residues 1305-1629 (TTSVQYITAE…QRKVLDLVLP (325 aa)). Residues 1308-1445 (VQYITAESYG…CSGFFTDKSR (138 aa)) are N-terminal hotdog fold. Positions 1308-1625 (VQYITAESYG…FAAVQRKVLD (318 aa)) constitute a PKS/mFAS DH domain. Histidine 1341 functions as the Proton acceptor; for dehydratase activity in the catalytic mechanism. The C-terminal hotdog fold stretch occupies residues 1473-1625 (GSVHMIKTGM…FAAVQRKVLD (153 aa)). The active-site Proton donor; for dehydratase activity is the aspartate 1536. Residues 1644-1671 (AAAAPSQRQQQQQQQQQQQPAQPVAASQ) show a composition bias toward low complexity. The tract at residues 1644 to 1689 (AAAAPSQRQQQQQQQQQQQPAQPVAASQESGMDDMPPTLVPSEKKD) is disordered. The Carrier domain occupies 1689-1763 (DVPSEKLKVI…ELVRHILGSS (75 aa)). O-(pantetheine 4'-phosphoryl)serine is present on serine 1723. Positions 1762-1778 (SSTPSSDSGPATPSITP) are enriched in polar residues. A disordered region spans residues 1762–1782 (SSTPSSDSGPATPSITPLQEP). Positions 1844 to 2069 (KVWLFPDGSG…GVVEGAHHFS (226 aa)) are claisen cyclase domain. Residue serine 1916 is the For Claisen cyclase activity of the active site.

The enzyme catalyses 6 malonyl-CoA + acetyl-CoA + 6 H(+) = naphtopyrone YWA1 + 6 CO2 + 7 CoA + H2O. The protein operates within secondary metabolite biosynthesis. Its function is as follows. Non-reducing polyketide synthase; part of the gene cluster that mediates the biosynthesis of ustilaginoidins, dimeric gamma-naphthopyrones isolated from different fungal species. The first step in the biosynthesis of ustilaginoidins is the production of gamma-naphthopyrone precursor YWA1 by the non-reducing polyketide synthase ustP, via condensation of one acetyl-CoA starter unit with 6 malonyl-CoA units. YWA1 is then probably substrate of the ustZ to yield norrubrofusarin via a dehydration reaction. A key enzyme in the biosynthetic pathway is the laccase ustL, which catalyzes the oxidative dimerization of norrubrofusarin to ustilaginoidin A. It can produce the M- and P-atropisomers in varying amounts, depending on the reaction conditions. For the biosynthesis of 3-methylustilaginoid in derivatives such as chaetochromin A, a methylated derivative of YWA1 is required. The C-methylation is considered to be catalyzed by ustM, the phosphopantetheine attachment site of which indicates that it acts on the growing polyketide chain before release of the product. For the biosynthesis of chaetochromin A, it is assumed that saturation of the D2 double bond takes place before dimerization, and is probably catalyzed by an external reductase because no candidate gene was identified within the cluster. The protein is Non-reducing polyketide synthase ustP of Ustilaginoidea virens (Rice false smut fungus).